The chain runs to 476 residues: Retinoic acid receptor gamma (476 aa).

The interval 1–109 is modulating; sequence MANSSKERLC…PPPPPRVYKP (109 aa). The segment covering 81-96 has biased composition (low complexity); that stretch reads STVETQSTSSEEMVPS. A disordered region spans residues 81–102; it reads STVETQSTSSEEMVPSSPSPPP. 2 NR C4-type zinc fingers span residues 110–130 and 146–170; these read CFVC…CEGC and CHRD…LQKC. Positions 110-175 form a DNA-binding region, nuclear receptor; that stretch reads CFVCNDKSSG…RLQKCFQVGM (66 aa). A hinge region spans residues 176–205; it reads SKEAVRNDRNKKKKEIKEEVVLPDSYEMPP. A Nuclear localization signal motif is present at residues 184–189; sequence RNKKKK. One can recognise an NR LBD domain in the interval 206-440; the sequence is EMEELIQKVS…PLIREMLENP (235 aa). The tract at residues 435 to 476 is disordered; it reads EMLENPEAFEDGAATPKPSERSSSESSNGSPTGEDSSGSKTP. Over residues 462–476 the composition is skewed to polar residues; the sequence is NGSPTGEDSSGSKTP.

This sequence belongs to the nuclear hormone receptor family. NR1 subfamily. In terms of assembly, heterodimer; with a rxr molecule. Binds DNA preferentially as a rar/rxr heterodimer. As to expression, expressed in embryos, tadpoles and various adult tissue such as kidney, testis, brain, liver, skeletal muscle and spleen.

Its subcellular location is the nucleus. Functionally, receptor for retinoic acid. Retinoic acid receptors bind as heterodimers to their target response elements in response to their ligands, all-trans or 9-cis retinoic acid, and regulate gene expression in various biological processes. The rar/rxr heterodimers bind to the retinoic acid response elements (RARE) composed of tandem 5'-AGGTCA-3' sites known as DR1-DR5. The sequence is that of Retinoic acid receptor gamma (rarg) from Xenopus laevis (African clawed frog).